Here is a 265-residue protein sequence, read N- to C-terminus: MICOS complex subunit Mic27 (265 aa).

The N-terminal 27 residues, 1-27 (MAAFRMGKLTTIPAGLIYASINVRLAK), are a transit peptide targeting the mitochondrion. The Mitochondrial intermembrane portion of the chain corresponds to 28–110 (EEEPKKQLVR…YVYLKNPPQD (83 aa)). A helical membrane pass occupies residues 111–129 (FLPKMGVITASGLAGLLSA). Residues 130–137 (RKGSRFKK) lie on the Mitochondrial matrix side of the membrane. A helical membrane pass occupies residues 138-155 (IAYPLGLATLGATVCYPA). At 156–265 (QSVIIAKITG…DDKDMYSTRS (110 aa)) the chain is on the mitochondrial intermembrane side. 2 disordered regions span residues 187 to 215 (SENE…PDLK) and 229 to 265 (VIKS…STRS). Serine 204 bears the Phosphoserine mark. Positions 229–241 (VIKSESTSGTTQF) are enriched in polar residues. Residues 246–265 (KLMDHGQSHPDDKDMYSTRS) show a composition bias toward basic and acidic residues.

The protein belongs to the apolipoprotein O/MICOS complex subunit Mic27 family. As to quaternary structure, component of the mitochondrial contact site and cristae organizing system (MICOS) complex, composed of at least MICOS10/MIC10, CHCHD3/MIC19, CHCHD6/MIC25, APOOL/MIC27, IMMT/MIC60, APOO/MIC23/MIC26 and MICOS13/MIC13. This complex was also known under the names MINOS or MitOS complex. The MICOS complex associates with mitochondrial outer membrane proteins SAMM50, MTX1 and MTX2 (together described as components of the mitochondrial outer membrane sorting assembly machinery (SAM) complex) and DNAJC11, mitochondrial inner membrane protein TMEM11 and with HSPA9. The MICOS and SAM complexes together with DNAJC11 are part of a large protein complex spanning both membranes termed the mitochondrial intermembrane space bridging (MIB) complex. Interacts with MICOS10/MIC10, IMMT/MIC60 and APOO/MIC23/MIC26.

The protein localises to the mitochondrion inner membrane. It localises to the mitochondrion. Its function is as follows. Component of the MICOS complex, a large protein complex of the mitochondrial inner membrane that plays crucial roles in the maintenance of crista junctions, inner membrane architecture, and formation of contact sites to the outer membrane. Specifically binds to cardiolipin (in vitro) but not to the precursor lipid phosphatidylglycerol. Plays a crucial role in crista junction formation and mitochondrial function. The sequence is that of MICOS complex subunit Mic27 (Apool) from Mus musculus (Mouse).